A 427-amino-acid polypeptide reads, in one-letter code: Probable purple acid phosphatase 20 (427 aa).

Residues 1-21 (MVKVLGLVAILLIVLAGNVLS) form the signal peptide. The N-linked (GlcNAc...) asparagine glycan is linked to Asn85. Fe cation contacts are provided by Asp147, Asp174, and Tyr177. A Zn(2+)-binding site is contributed by Asp174. Residues Asn207 and His291 each contribute to the Zn(2+) site. Asn207 provides a ligand contact to substrate. Catalysis depends on His301, which acts as the Proton donor. Position 330 (His330) interacts with Zn(2+). Position 330-332 (330-332 (HVH)) interacts with substrate. His332 serves as a coordination point for Fe cation. Asn392 is a glycosylation site (N-linked (GlcNAc...) asparagine).

Belongs to the metallophosphoesterase superfamily. Purple acid phosphatase family. As to quaternary structure, homodimer. Fe cation serves as cofactor. Zn(2+) is required as a cofactor. In terms of tissue distribution, expressed flowers and siliques.

Its subcellular location is the secreted. It catalyses the reaction a phosphate monoester + H2O = an alcohol + phosphate. This is Probable purple acid phosphatase 20 (PAP20) from Arabidopsis thaliana (Mouse-ear cress).